Consider the following 106-residue polypeptide: Iron-sulfur cluster assembly protein CyaY (106 aa).

Belongs to the frataxin family.

Involved in iron-sulfur (Fe-S) cluster assembly. May act as a regulator of Fe-S biogenesis. The protein is Iron-sulfur cluster assembly protein CyaY of Pectobacterium carotovorum subsp. carotovorum (strain PC1).